We begin with the raw amino-acid sequence, 740 residues long: Cell death abnormality protein 12 (740 aa).

One can recognise an ELMO domain in the interval serine 348–leucine 494. Residues isoleucine 555–threonine 690 are required for punctate localization, cell corpse engulfment and distal cell tip migration. The SH3-binding motif lies at proline 724–proline 727.

As to quaternary structure, interacts with psr-1. Forms a ternary complex with ced-2 and ced-5.

The protein resides in the cytoplasm. Functionally, involved in apoptosis and necrosis. Required for the cell corpse engulfment process. Has roles in the formation of actin halos and distal tip cell migration. Plays no role in amphid axon outgrowth. The chain is Cell death abnormality protein 12 from Caenorhabditis briggsae.